We begin with the raw amino-acid sequence, 426 residues long: Homeobox protein knotted-1-like LET12 (426 aa).

Disordered stretches follow at residues 1-26, 85-158, and 270-290; these read MEFQ…QQNA, QTSN…ENSW, and GVAP…DQAD. Residues 15-24 show a composition bias toward low complexity; that stretch reads QQQQQQQQQQ. Residues 104 to 114 show a composition bias toward gly residues; it reads AGGGSNGGGSG. Low complexity predominate over residues 139-151; sequence ENNNNNNNNNNNN. One can recognise an ELK domain in the interval 327 to 347; that stretch reads ELKHELKQGYKEKIVDIREEI. Positions 348 to 411 form a DNA-binding region, homeobox; TALE-type; sequence LRKRRAGKLP…NQRKRNWHSN (64 aa). The tract at residues 406–426 is disordered; it reads RNWHSNPSTSSSQKSQTQECR. Over residues 413–426 the composition is skewed to low complexity; the sequence is STSSSQKSQTQECR.

It belongs to the TALE/KNOX homeobox family. In terms of tissue distribution, ubiquitously expressed in the mature plant.

The protein resides in the nucleus. Functionally, may have a role to play in formative events in ovule and embryo morphogenesis. The protein is Homeobox protein knotted-1-like LET12 (LET12) of Solanum lycopersicum (Tomato).